A 118-amino-acid chain; its full sequence is Holo-[acyl-carrier-protein] synthase (118 aa).

Positions 8 and 58 each coordinate Mg(2+).

This sequence belongs to the P-Pant transferase superfamily. AcpS family. Requires Mg(2+) as cofactor.

It is found in the cytoplasm. The catalysed reaction is apo-[ACP] + CoA = holo-[ACP] + adenosine 3',5'-bisphosphate + H(+). Functionally, transfers the 4'-phosphopantetheine moiety from coenzyme A to a Ser of acyl-carrier-protein. This chain is Holo-[acyl-carrier-protein] synthase, found in Lactobacillus helveticus (strain DPC 4571).